Here is a 65-residue protein sequence, read N- to C-terminus: Small ribosomal subunit protein bS21 (65 aa).

This sequence belongs to the bacterial ribosomal protein bS21 family.

This chain is Small ribosomal subunit protein bS21, found in Chlorobium chlorochromatii (strain CaD3).